Reading from the N-terminus, the 330-residue chain is MKKTVFSGIQPSGTLTLGNYLGAMKHFVSLQEDYNCYFCIVDQHAITVPQDRLKLRENIRSLAALYLAVGIDPSKATLFIQSEVPAHAQLGWMMQCVSYIGELERMTQFKDKSDGKEAVSASLLTYPPLMAADILLYHTNIVPVGEDQKQHLELTRDLAERFNKKYNDIFTIPEVQIPKVGARIMSLNDPSKKMSKSNPNPKSYISMLDDEKTITKKIKSAVTDSDGIVKFDKENKPAISNLLSIYSLCKGASIEEVEAQFVGKGYGEFKESLAQVVVDTLKPIQERYEQLIQSEELDHILDQGADKANRVARKTLEKAERAMGLGRKRR.

ATP-binding positions include 10 to 12 and 18 to 19; these read QPS and GN. A 'HIGH' region motif is present at residues 11–19; sequence PSGTLTLGN. Position 133 (Asp133) interacts with L-tryptophan. ATP contacts are provided by residues 145-147, Ile184, and 193-197; these read GED and KMSKS. The 'KMSKS' region signature appears at 193–197; sequence KMSKS.

This sequence belongs to the class-I aminoacyl-tRNA synthetase family. In terms of assembly, homodimer.

It localises to the cytoplasm. It catalyses the reaction tRNA(Trp) + L-tryptophan + ATP = L-tryptophyl-tRNA(Trp) + AMP + diphosphate + H(+). Catalyzes the attachment of tryptophan to tRNA(Trp). The polypeptide is Tryptophan--tRNA ligase (Halalkalibacterium halodurans (strain ATCC BAA-125 / DSM 18197 / FERM 7344 / JCM 9153 / C-125) (Bacillus halodurans)).